We begin with the raw amino-acid sequence, 293 residues long: Methylsterol monooxygenase 1 (293 aa).

A run of 2 helical transmembrane segments spans residues 55-75 (LIVH…FQFI) and 100-120 (VLLF…YYFT). Residues 145–274 (CAVIEDTWHY…FTWWDRIFGT (130 aa)) enclose the Fatty acid hydroxylase domain. A Histidine box-1 motif is present at residues 157 to 161 (HRLLH). A Histidine box-2 motif is present at residues 170–174 (HKVHH). A helical membrane pass occupies residues 199–219 (FFIGIVLLCDHVILLWAWVTI). Positions 249-255 (HHDFHHM) match the Histidine box-3 motif.

Belongs to the sterol desaturase family. It depends on Fe cation as a cofactor. In terms of processing, ubiquitinated by MARCHF6, leading to proteasomal degradation.

The protein resides in the endoplasmic reticulum membrane. It catalyses the reaction 4,4-dimethyl-5alpha-cholest-7-en-3beta-ol + 6 Fe(II)-[cytochrome b5] + 3 O2 + 5 H(+) = 4alpha-carboxy-4beta-methyl-5alpha-cholest-7-ene-3beta-ol + 6 Fe(III)-[cytochrome b5] + 4 H2O. It carries out the reaction 4,4-dimethyl-5alpha-cholesta-8,24-dien-3beta-ol + 6 Fe(II)-[cytochrome b5] + 3 O2 + 5 H(+) = 4beta-methylzymosterol-4alpha-carboxylate + 6 Fe(III)-[cytochrome b5] + 4 H2O. The catalysed reaction is 4alpha-methylzymosterol + 6 Fe(II)-[cytochrome b5] + 3 O2 + 5 H(+) = 4alpha-carboxyzymosterol + 6 Fe(III)-[cytochrome b5] + 4 H2O. The enzyme catalyses 4alpha-methyl-5alpha-cholest-7-en-3beta-ol + 6 Fe(II)-[cytochrome b5] + 3 O2 + 5 H(+) = 4alpha-carboxy-5alpha-cholest-7-en-3beta-ol + 6 Fe(III)-[cytochrome b5] + 4 H2O. It catalyses the reaction 4,4-dimethyl-5alpha-cholest-8-en-3beta-ol + 6 Fe(II)-[cytochrome b5] + 3 O2 + 5 H(+) = 4alpha-carboxy-4beta-methyl-5alpha-cholest-8-en-3beta-ol + 6 Fe(III)-[cytochrome b5] + 4 H2O. It carries out the reaction 4alpha-methyl-5alpha-cholest-8-en-3beta-ol + 6 Fe(II)-[cytochrome b5] + 3 O2 + 5 H(+) = 4alpha-carboxy-5alpha-cholest-8-ene-3beta-ol + 6 Fe(III)-[cytochrome b5] + 4 H2O. It participates in steroid biosynthesis; zymosterol biosynthesis; zymosterol from lanosterol: step 3/6. It functions in the pathway steroid biosynthesis; cholesterol biosynthesis. In terms of biological role, catalyzes the three-step monooxygenation required for the demethylation of 4,4-dimethyl and 4alpha-methylsterols, which can be subsequently metabolized to cholesterol. The sequence is that of Methylsterol monooxygenase 1 (MSMO1) from Macaca fascicularis (Crab-eating macaque).